We begin with the raw amino-acid sequence, 88 residues long: MSSFDKTMKFNFSDDSAETNVEEVLNTVYDALQEKGYNPINQIVGYLLSGDPAYIPRHRDARNLIRKLERDELIEELVKSYLEQHKEA.

This sequence belongs to the UPF0297 family.

The chain is UPF0297 protein RBAM_024500 from Bacillus velezensis (strain DSM 23117 / BGSC 10A6 / LMG 26770 / FZB42) (Bacillus amyloliquefaciens subsp. plantarum).